The primary structure comprises 488 residues: Multidrug resistance outer membrane protein MdtP (488 aa).

Positions 1 to 23 (MINRQLSRLLLCSILGSTTLISG) are cleaved as a signal peptide. The N-palmitoyl cysteine moiety is linked to residue C24. Residue C24 is the site of S-diacylglycerol cysteine attachment.

This sequence belongs to the outer membrane factor (OMF) (TC 1.B.17) family. Could be part of a tripartite efflux system composed of MdtN, MdtO and MdtP.

It is found in the cell outer membrane. Functionally, could be involved in resistance to puromycin, acriflavine and tetraphenylarsonium chloride. The polypeptide is Multidrug resistance outer membrane protein MdtP (mdtP) (Shigella flexneri).